The following is a 306-amino-acid chain: MNNGQATITRNGGRFEIRCRHLDRDYTMPLPNATSNDNFLDCIKFITECVGFDYVSSGFKLIANVNDFQHLNGNSTLLIGKTKIGPLILKKVRSLPCCNDALFRNEFRILAKMHGILRLKNDVNGHKYGIILERCYKPKINFSNFVTAINDLDVFHSSNQHLLHGDANPDNIMSDSEGYLKLVDPVCLLENQVNMVNIEYESLTQEAEKKVFINSLLQLVEKQMSATIDEIYVNLKEVNPSFNLEHGLKLSDLLDNIDVYNSDHWKLMLNHRPMMPELSVLNDLTYYDTGEVRDLVTEDLDDEDDV.

The polypeptide is Non-structural protein 3 (Segment-7) (Banna virus (BAV)).